Here is a 380-residue protein sequence, read N- to C-terminus: E3 ubiquitin-protein ligase RNF13 (380 aa).

Residues 1–34 (MLLSIGMLMLSATQVYTILTVQLFAFLNLLPVEA) form the signal peptide. At 35 to 182 (DILAYNFENA…VPEFSLPLEY (148 aa)) the chain is on the lumenal side. The PA domain occupies 65-160 (KGFLINSKPE…GESSANSLKD (96 aa)). N88 carries an N-linked (GlcNAc...) asparagine glycan. Residues 183 to 203 (YLIPFLIIVGICLILIVIFMI) traverse the membrane as a helical segment. Residues 204 to 380 (TKFVQDRHRA…ERDYNIANTV (177 aa)) lie on the Cytoplasmic side of the membrane. The RING-type; atypical zinc finger occupies 240–282 (CAICLDEYEDGDKLRILPCSHAYHCKCVDPWLTKTKKTCPVCK). A disordered region spans residues 285–380 (VVPSQGDSDS…ERDYNIANTV (96 aa)). Composition is skewed to acidic residues over residues 292–304 (SDSDTDSSQEENE) and 339–356 (SDYEEDDNDTDSSDAENE).

As to quaternary structure, interacts with ERN1. Autoubiquitinated.

It localises to the endoplasmic reticulum membrane. The protein localises to the late endosome membrane. It is found in the lysosome membrane. Its subcellular location is the nucleus inner membrane. It catalyses the reaction S-ubiquitinyl-[E2 ubiquitin-conjugating enzyme]-L-cysteine + [acceptor protein]-L-lysine = [E2 ubiquitin-conjugating enzyme]-L-cysteine + N(6)-ubiquitinyl-[acceptor protein]-L-lysine.. It participates in protein modification; protein ubiquitination. In terms of biological role, E3 ubiquitin-protein ligase that regulates cell proliferation. Involved in apoptosis regulation. Mediates ER stress-induced activation of JNK signaling pathway and apoptosis by promoting ERN1 activation and splicing of XBP1 mRNA. Also involved in protein trafficking and localization. The sequence is that of E3 ubiquitin-protein ligase RNF13 (RNF13) from Bos taurus (Bovine).